Reading from the N-terminus, the 236-residue chain is Small ribosomal subunit protein uS2c (236 aa).

As to quaternary structure, component of the chloroplast small ribosomal subunit (SSU). Mature 70S chloroplast ribosomes of higher plants consist of a small (30S) and a large (50S) subunit. The 30S small subunit contains 1 molecule of ribosomal RNA (16S rRNA) and 24 different proteins. The 50S large subunit contains 3 rRNA molecules (23S, 5S and 4.5S rRNA) and 33 different proteins.

It localises to the plastid. The protein resides in the chloroplast. In terms of biological role, component of the chloroplast ribosome (chloro-ribosome), a dedicated translation machinery responsible for the synthesis of chloroplast genome-encoded proteins, including proteins of the transcription and translation machinery and components of the photosynthetic apparatus. This is Small ribosomal subunit protein uS2c (rps2) from Spinacia oleracea (Spinach).